We begin with the raw amino-acid sequence, 384 residues long: S-adenosylmethionine synthase (384 aa).

His15 provides a ligand contact to ATP. Asp17 lines the Mg(2+) pocket. Position 43 (Glu43) interacts with K(+). L-methionine contacts are provided by Glu56 and Gln99. Positions 99–109 are flexible loop; sequence QSPDINQGVDR. ATP contacts are provided by residues 164-166, 231-232, Asp240, 246-247, Ala263, and Lys267; these read DAK, RF, and RK. Residue Asp240 participates in L-methionine binding. Lys271 is an L-methionine binding site.

The protein belongs to the AdoMet synthase family. Homotetramer; dimer of dimers. Requires Mg(2+) as cofactor. K(+) is required as a cofactor.

The protein localises to the cytoplasm. It catalyses the reaction L-methionine + ATP + H2O = S-adenosyl-L-methionine + phosphate + diphosphate. The protein operates within amino-acid biosynthesis; S-adenosyl-L-methionine biosynthesis; S-adenosyl-L-methionine from L-methionine: step 1/1. Catalyzes the formation of S-adenosylmethionine (AdoMet) from methionine and ATP. The overall synthetic reaction is composed of two sequential steps, AdoMet formation and the subsequent tripolyphosphate hydrolysis which occurs prior to release of AdoMet from the enzyme. The chain is S-adenosylmethionine synthase from Shewanella woodyi (strain ATCC 51908 / MS32).